The sequence spans 231 residues: Cytochrome c oxidase subunit 2 (231 aa).

Residues 1–14 are Mitochondrial intermembrane-facing; sequence MATPAQLGLQNATS. A helical transmembrane segment spans residues 15-45; it reads PIMEELIAFHDHALMIIFLISSLVLYIISLM. Residues 46–59 lie on the Mitochondrial matrix side of the membrane; that stretch reads LTTKLTHTSTMNAQ. The helical transmembrane segment at 60-87 threads the bilayer; it reads EIEMIWTILPAIILIMIALPSLRILYMT. Over 88-231 the chain is Mitochondrial intermembrane; sequence DEFNKPYLTL…WASYLYIVSL (144 aa). Residues H161, C196, E198, C200, H204, and M207 each contribute to the Cu cation site. Residue E198 participates in Mg(2+) binding.

Belongs to the cytochrome c oxidase subunit 2 family. Component of the cytochrome c oxidase (complex IV, CIV), a multisubunit enzyme composed of 14 subunits. The complex is composed of a catalytic core of 3 subunits MT-CO1, MT-CO2 and MT-CO3, encoded in the mitochondrial DNA, and 11 supernumerary subunits COX4I, COX5A, COX5B, COX6A, COX6B, COX6C, COX7A, COX7B, COX7C, COX8 and NDUFA4, which are encoded in the nuclear genome. The complex exists as a monomer or a dimer and forms supercomplexes (SCs) in the inner mitochondrial membrane with NADH-ubiquinone oxidoreductase (complex I, CI) and ubiquinol-cytochrome c oxidoreductase (cytochrome b-c1 complex, complex III, CIII), resulting in different assemblies (supercomplex SCI(1)III(2)IV(1) and megacomplex MCI(2)III(2)IV(2)). Found in a complex with TMEM177, COA6, COX18, COX20, SCO1 and SCO2. Interacts with TMEM177 in a COX20-dependent manner. Interacts with COX20. Interacts with COX16. The cofactor is Cu cation.

The protein resides in the mitochondrion inner membrane. It catalyses the reaction 4 Fe(II)-[cytochrome c] + O2 + 8 H(+)(in) = 4 Fe(III)-[cytochrome c] + 2 H2O + 4 H(+)(out). Functionally, component of the cytochrome c oxidase, the last enzyme in the mitochondrial electron transport chain which drives oxidative phosphorylation. The respiratory chain contains 3 multisubunit complexes succinate dehydrogenase (complex II, CII), ubiquinol-cytochrome c oxidoreductase (cytochrome b-c1 complex, complex III, CIII) and cytochrome c oxidase (complex IV, CIV), that cooperate to transfer electrons derived from NADH and succinate to molecular oxygen, creating an electrochemical gradient over the inner membrane that drives transmembrane transport and the ATP synthase. Cytochrome c oxidase is the component of the respiratory chain that catalyzes the reduction of oxygen to water. Electrons originating from reduced cytochrome c in the intermembrane space (IMS) are transferred via the dinuclear copper A center (CU(A)) of subunit 2 and heme A of subunit 1 to the active site in subunit 1, a binuclear center (BNC) formed by heme A3 and copper B (CU(B)). The BNC reduces molecular oxygen to 2 water molecules using 4 electrons from cytochrome c in the IMS and 4 protons from the mitochondrial matrix. In Aotus nigriceps (Black-headed night monkey), this protein is Cytochrome c oxidase subunit 2 (MT-CO2).